A 403-amino-acid polypeptide reads, in one-letter code: MAESVERLLQRVEELEQELARERSRRIAGDGHCGRTRIQKMSDEVVDSNPYSRLMALKRMGVVSDYEKIRTYAVAIVGVGGVGSVTAEMLTRCGIGKLLLFDYDKVELANMNRLFFQPYQAGMSKVQAAEHTLRSINPDVLFEVHNYNITTVEHFEHFMNRISNGGLEEGQPVDLVLSCVDNFEARMAINTACNELGQTWMESGVSENAVSGHIQLMVPGESACFACAPPLVVASNIDEKTLKREGVCAASLPTTMGVVAGILVQNVLKFLLKFGTVSFYLGYNAMQDFFPTMFMKPNPQCDDKNCRKQQEEYKKRAPAQPTQETAPQEEEEVVHEDNEWGIELVSEVSEEELKNSSGPVPTLPEGITVAYTVPKKREDSVSEVTVEDSGESLEDLMARMKKM.

Residues glycine 81, aspartate 102, lysine 125, asparagine 148, and asparagine 182 each contribute to the ATP site. The Zn(2+) site is built by cysteine 224 and cysteine 227. The active-site Glycyl thioester intermediate is cysteine 248. Zn(2+)-binding residues include cysteine 301 and cysteine 306. Positions 306 to 315 (CRKQQEEYKK) are enriched in basic and acidic residues. Residues 306-337 (CRKQQEEYKKRAPAQPTQETAPQEEEEVVHED) form a disordered region. Residues 333 to 345 (VVHEDNEWGIELV) carry the UFM1-interacting sequence (UIS) motif. The linker stretch occupies residues 346–376 (SEVSEEELKNSSGPVPTLPEGITVAYTVPKK). A phosphoserine mark is found at serine 357 and serine 392. The short motif at 388-403 (DSGESLEDLMARMKKM) is the UFC1-binding sequence (UFC) element.

Belongs to the ubiquitin-activating E1 family. UBA5 subfamily. As to quaternary structure, homodimer; homodimerization is required for UFM1 activation. Interacts (via UIS motif) with UFM1; binds UFM1 via a trans-binding mechanism in which UFM1 interacts with distinct sites in both subunits of the UBA5 homodimer. Interacts (via C-terminus) with UFC1. Interacts (via UIS motif) with GABARAPL2 and, with lower affinity, with GABARAP and GABARAPL1.

The protein localises to the cytoplasm. Its subcellular location is the nucleus. It is found in the endoplasmic reticulum membrane. It localises to the golgi apparatus. Its function is as follows. E1-like enzyme which specifically catalyzes the first step in ufmylation. Activates UFM1 by first adenylating its C-terminal glycine residue with ATP, and thereafter linking this residue to the side chain of a cysteine residue in E1, yielding a UFM1-E1 thioester and free AMP. Activates UFM1 via a trans-binding mechanism, in which UFM1 interacts with distinct sites in both subunits of the UBA5 homodimer. Trans-binding also promotes stabilization of the UBA5 homodimer, and enhances ATP-binding. Transfer of UFM1 from UBA5 to the E2-like enzyme UFC1 also takes place using a trans mechanism. Ufmylation plays a key role in various processes, such as ribosome recycling, response to DNA damage, interferon response or reticulophagy (also called ER-phagy). Ufmylation is essential for erythroid differentiation of both megakaryocytes and erythrocytes. The sequence is that of Ubiquitin-like modifier-activating enzyme 5 from Rattus norvegicus (Rat).